Consider the following 559-residue polypeptide: Probable D-2-hydroxyglutarate dehydrogenase, mitochondrial (559 aa).

A mitochondrion-targeting transit peptide spans 1-80; sequence MARRAAAGLL…MNFEVQKRSF (80 aa). The FAD-binding PCMH-type domain maps to 131–310; that stretch reads YKGSSQLLLL…TKIAILTPAK (180 aa).

It belongs to the FAD-binding oxidoreductase/transferase type 4 family. As to quaternary structure, homodimer. The cofactor is FAD.

It is found in the mitochondrion. The enzyme catalyses (R)-2-hydroxyglutarate + A = 2-oxoglutarate + AH2. In terms of biological role, catalyzes the oxidation of D-2-hydroxyglutarate to alpha-ketoglutarate. The polypeptide is Probable D-2-hydroxyglutarate dehydrogenase, mitochondrial (D2HGDH) (Oryza sativa subsp. indica (Rice)).